Consider the following 423-residue polypeptide: UPF0229 protein VV1_2091 (423 aa).

The tract at residues 81-111 is disordered; sequence QFITGDKIERPKGGQGGGGAGDGDASADGEG. Over residues 93–102 the composition is skewed to gly residues; that stretch reads GGQGGGGAGD.

This sequence belongs to the UPF0229 family.

In Vibrio vulnificus (strain CMCP6), this protein is UPF0229 protein VV1_2091.